The following is a 497-amino-acid chain: 3-octaprenyl-4-hydroxybenzoate carboxy-lyase (497 aa).

Residue Asn175 coordinates Mn(2+). Prenylated FMN-binding positions include 178–180, 192–194, and 197–198; these read IYR, RWL, and RG. Glu241 provides a ligand contact to Mn(2+). The active-site Proton donor is the Asp290.

This sequence belongs to the UbiD family. As to quaternary structure, homohexamer. Requires prenylated FMN as cofactor. Mn(2+) serves as cofactor.

The protein resides in the cell membrane. The catalysed reaction is a 4-hydroxy-3-(all-trans-polyprenyl)benzoate + H(+) = a 2-(all-trans-polyprenyl)phenol + CO2. Its pathway is cofactor biosynthesis; ubiquinone biosynthesis. Its function is as follows. Catalyzes the decarboxylation of 3-octaprenyl-4-hydroxy benzoate to 2-octaprenylphenol, an intermediate step in ubiquinone biosynthesis. This chain is 3-octaprenyl-4-hydroxybenzoate carboxy-lyase, found in Escherichia coli O157:H7.